Consider the following 334-residue polypeptide: Protein-methionine-sulfoxide reductase catalytic subunit MsrP (334 aa).

Positions 1–44 (MKKNQFLKESDVTAESVFFMKRRQVLKALGISATALSLPHAAHA) form a signal peptide, tat-type signal. Mo-molybdopterin contacts are provided by residues asparagine 88, 91–92 (YE), cysteine 146, threonine 181, asparagine 233, arginine 238, and 249–251 (GIK).

This sequence belongs to the MsrP family. In terms of assembly, heterodimer of a catalytic subunit (MsrP) and a heme-binding subunit (MsrQ). It depends on Mo-molybdopterin as a cofactor. In terms of processing, predicted to be exported by the Tat system. The position of the signal peptide cleavage has not been experimentally proven.

The protein localises to the periplasm. It catalyses the reaction L-methionyl-[protein] + a quinone + H2O = L-methionyl-(S)-S-oxide-[protein] + a quinol. The catalysed reaction is L-methionyl-[protein] + a quinone + H2O = L-methionyl-(R)-S-oxide-[protein] + a quinol. Functionally, part of the MsrPQ system that repairs oxidized periplasmic proteins containing methionine sulfoxide residues (Met-O), using respiratory chain electrons. Thus protects these proteins from oxidative-stress damage caused by reactive species of oxygen and chlorine generated by the host defense mechanisms. MsrPQ is essential for the maintenance of envelope integrity under bleach stress, rescuing a wide series of structurally unrelated periplasmic proteins from methionine oxidation, including the primary periplasmic chaperone SurA and the lipoprotein Pal. The catalytic subunit MsrP is non-stereospecific, being able to reduce both (R-) and (S-) diastereoisomers of methionine sulfoxide. The polypeptide is Protein-methionine-sulfoxide reductase catalytic subunit MsrP (Escherichia coli (strain K12 / MC4100 / BW2952)).